The sequence spans 212 residues: F420-dependent NADP reductase (212 aa).

NADP(+) contacts are provided by residues 9 to 12 (TGNL), 31 to 32 (SR), Lys36, Ile72, His76, Val98, and Ala137. Coenzyme F420-(gamma-Glu)n is bound at residue Leu207.

The protein belongs to the F420-dependent NADP reductase family. As to quaternary structure, homodimer.

It carries out the reaction reduced coenzyme F420-(gamma-L-Glu)(n) + NADP(+) = oxidized coenzyme F420-(gamma-L-Glu)(n) + NADPH + 2 H(+). Catalyzes the reversible reduction of NADP(+) by F420H(2). In this reaction the proS hydrogen at C5 of F420 is transferred into the proS position at C4 of NADPH. The polypeptide is F420-dependent NADP reductase (fno) (Archaeoglobus fulgidus (strain ATCC 49558 / DSM 4304 / JCM 9628 / NBRC 100126 / VC-16)).